The primary structure comprises 374 residues: Phenoloxidase-activating enzyme 1 (374 aa).

Residues 1–19 (MWKSLVFFVSALIWSFGSS) form the signal peptide. Positions 20–120 (QDCTTPTGSR…QCGIDTTGDR (101 aa)) are cleaved as a propeptide — activation peptide. Positions 21–74 (DCTTPTGSRSNCVSLYQCQPLYNAFEQRPLPTHVVSYLGRSQCGFEGYVPRVCC) constitute a Clip domain. 3 disulfides stabilise this stretch: cysteine 22-cysteine 73, cysteine 32-cysteine 63, and cysteine 38-cysteine 74. Over residues 83–97 (ATSARPTQAPTQGSS) the composition is skewed to polar residues. Residues 83 to 114 (ATSARPTQAPTQGSSDVFPEDSSPAPRNQCGI) are disordered. A Peptidase S1 domain is found at 121-370 (VYGGTITDLD…YIDWIQNTIA (250 aa)). A disulfide bond links cysteine 151 and cysteine 167. Histidine 166 serves as the catalytic Charge relay system. Ca(2+) contacts are provided by glutamate 186 and aspartate 194. Catalysis depends on aspartate 228, which acts as the Charge relay system. Cystine bridges form between cysteine 292–cysteine 307 and cysteine 317–cysteine 346. Serine 321 acts as the Charge relay system in catalysis.

It belongs to the peptidase S1 family. CLIP subfamily. In terms of processing, activated by the removal of the N-terminal inhibitory propeptide. As to expression, expressed in hemocytes.

Its subcellular location is the secreted. Inhibited by aprotenin. Not inhibited by EDTA, PMSF or leupeptin. Serine protease which, by cleaving and activating prophenoloxidase (PPO1) after immune challenge, plays an essential role in the melanization immune response to wounding. The polypeptide is Phenoloxidase-activating enzyme 1 (Spodoptera litura (Asian cotton leafworm)).